The primary structure comprises 365 residues: G-protein coupled receptor 68 (365 aa).

The Extracellular segment spans residues 1 to 12; that stretch reads MGNITTENSSLS. N-linked (GlcNAc...) asparagine glycosylation is found at Asn3 and Asn8. Residues 13–49 form a helical membrane-spanning segment; it reads CPIDHTIHQTLAPVVYVTVLVVGFPANCLSLYFGYLQ. 2 disulfide bridges follow: Cys13–Cys258 and Cys94–Cys172. At 50–53 the chain is on the cytoplasmic side; the sequence is IKAR. The chain crosses the membrane as a helical span at residues 54-84; it reads NELGVYLCNLTIADLFYICSLPFWLQYVLQH. Residues 85-89 lie on the Extracellular side of the membrane; sequence DDWSH. A helical transmembrane segment spans residues 90-125; it reads GDLSCQVCGILLYENIYISVGFLCCISIDRYLAVAH. Over 126–133 the chain is Cytoplasmic; the sequence is PFRFHQFR. The helical transmembrane segment at 134 to 160 threads the bilayer; it reads TLKAAVGVSVLIWAKELLTSIYFLNHK. At 161–176 the chain is on the extracellular side; it reads EVIEDEDQHRVCFEHY. Residues 161 to 176 are extracellular loop 2 (ECL2); sequence EVIEDEDQHRVCFEHY. The chain crosses the membrane as a helical span at residues 177–214; that stretch reads PIQAWQRSINYYRFLVGFLFPICLLLASYQGILRAVRR. Residues 215-218 lie on the Cytoplasmic side of the membrane; the sequence is SHGT. A helical membrane pass occupies residues 219-254; the sequence is QKSRKDQIQRLVLSTVVIFLACFLPYHVLLLVRSLW. The Extracellular portion of the chain corresponds to 255–260; it reads ERNCEF. Residues 261-289 form a helical membrane-spanning segment; sequence AKSIFNVYHFSLLLTSFNCVADPVLYCFV. Residues 290–365 lie on the Cytoplasmic side of the membrane; it reads SETTHRDLAR…VGGPSTVGLA (76 aa).

Belongs to the G-protein coupled receptor 1 family. In terms of tissue distribution, expressed in the lung, testis, heart, brain, spleen, thymus, brown fat, small intestine, colon, peripheral blood leukocytes, macrophages, stomach, ovary and white fat but not in the liver, kidney, and skeletal muscle. Expression in the prostate is weak but detectable. Specifically expressed in endothelial cells of small-diameter resistance arteries.

The protein localises to the cell membrane. Its activity is regulated as follows. Activated by a network of residues that connects an extracellular-facing cavity to Glu-149, a conserved charged residue buried in the transmembrane core of the receptor. Protonation likely drives conformational changes in extracellular loop 2 (ECL2), which stabilizes movement of transmembrane 3 (TM3) and a series of rearrangements that connect the extracellular-facing cavity to Glu-149, a residue only conserved in proton-sensing G-protein coupled receptors. Activated in an allosteric manner by divalent metal ions at the extracellular surface following the order: Cd(2+) &gt; Co(2+) &gt; Ni(2+) &gt; Zn(2+) &gt; Fe(2+) &gt; Ca(2+) &gt; Mg(2+). Activated by ogerin (ZINC67740571), a selective GPR68 positive allosteric modulator. Inhibited by small molecule GPR68-I, decreasing inflammation in models of colitis. Proton-sensing G-protein coupled receptor activated by extracellular pH, which is required to monitor pH changes and generate adaptive reactions. The receptor is almost silent at pH 7.8 but fully activated at pH 6.8. Ligand binding causes a conformation change that triggers signaling via guanine nucleotide-binding proteins (G proteins) and modulates the activity of downstream effectors, such as phospholipase C. GPR68 is mainly coupled to G(q) G proteins and mediates production of diacylglycerol (DAG) and inositol 1,4,5-trisphosphate (IP3). Acts as a key mechanosensor of fluid shear stress and membrane stretch. Expressed in endothelial cells of small-diameter resistance arteries, where it mediates flow-induced dilation in response to shear stress. May represents an osteoblastic pH sensor regulating cell-mediated responses to acidosis in bone. Acts as a regulator of calcium-sensing receptor CASR in a seesaw manner: GPR68-mediated signaling inhibits CASR signaling in response to protons, while CASR inhibits GPR68 in presence of extracellular calcium. Also functions as a metastasis suppressor gene in prostate cancer. This chain is G-protein coupled receptor 68, found in Mus musculus (Mouse).